The chain runs to 223 residues: Neurotrophic factor BDNF precursor form (223 aa).

The signal sequence occupies residues 1-5 (SCMKA). A propeptide spanning residues 6–114 (APMKEVSIRG…AANMSMRVRR (109 aa)) is cleaved from the precursor. An N-linked (GlcNAc...) asparagine glycan is attached at Asn-107. Cystine bridges form between Cys-127/Cys-194 and Cys-172/Cys-223.

It belongs to the NGF-beta family.

It is found in the secreted. Functionally, promotes the survival of neuronal populations that are all located either in the central nervous system or directly connected to it. This chain is Neurotrophic factor BDNF precursor form (BDNF), found in Aspidites melanocephalus (Black-headed python).